Reading from the N-terminus, the 122-residue chain is Large ribosomal subunit protein uL14 (122 aa).

The protein belongs to the universal ribosomal protein uL14 family. Part of the 50S ribosomal subunit. Forms a cluster with proteins L3 and L19. In the 70S ribosome, L14 and L19 interact and together make contacts with the 16S rRNA in bridges B5 and B8.

Functionally, binds to 23S rRNA. Forms part of two intersubunit bridges in the 70S ribosome. This Rhizobium etli (strain CIAT 652) protein is Large ribosomal subunit protein uL14.